A 252-amino-acid chain; its full sequence is Imidazole glycerol phosphate synthase subunit HisF (252 aa).

Active-site residues include Asp11 and Asp130.

This sequence belongs to the HisA/HisF family. Heterodimer of HisH and HisF.

It localises to the cytoplasm. It carries out the reaction 5-[(5-phospho-1-deoxy-D-ribulos-1-ylimino)methylamino]-1-(5-phospho-beta-D-ribosyl)imidazole-4-carboxamide + L-glutamine = D-erythro-1-(imidazol-4-yl)glycerol 3-phosphate + 5-amino-1-(5-phospho-beta-D-ribosyl)imidazole-4-carboxamide + L-glutamate + H(+). It participates in amino-acid biosynthesis; L-histidine biosynthesis; L-histidine from 5-phospho-alpha-D-ribose 1-diphosphate: step 5/9. Its function is as follows. IGPS catalyzes the conversion of PRFAR and glutamine to IGP, AICAR and glutamate. The HisF subunit catalyzes the cyclization activity that produces IGP and AICAR from PRFAR using the ammonia provided by the HisH subunit. This Bacillus thuringiensis (strain Al Hakam) protein is Imidazole glycerol phosphate synthase subunit HisF.